A 593-amino-acid chain; its full sequence is Aspartate--tRNA(Asp/Asn) ligase (593 aa).

Glu-176 contacts L-aspartate. The aspartate stretch occupies residues 200 to 203; that stretch reads QIFK. L-aspartate is bound at residue Arg-222. Residues 222 to 224 and Gln-231 contribute to the ATP site; that span reads RDE. His-450 provides a ligand contact to L-aspartate. Residue Glu-490 coordinates ATP. Residue Arg-497 participates in L-aspartate binding. ATP is bound at residue 542 to 545; sequence GLDR.

Belongs to the class-II aminoacyl-tRNA synthetase family. Type 1 subfamily. Homodimer.

The protein localises to the cytoplasm. It carries out the reaction tRNA(Asx) + L-aspartate + ATP = L-aspartyl-tRNA(Asx) + AMP + diphosphate. Functionally, aspartyl-tRNA synthetase with relaxed tRNA specificity since it is able to aspartylate not only its cognate tRNA(Asp) but also tRNA(Asn). Reaction proceeds in two steps: L-aspartate is first activated by ATP to form Asp-AMP and then transferred to the acceptor end of tRNA(Asp/Asn). In Symbiobacterium thermophilum (strain DSM 24528 / JCM 14929 / IAM 14863 / T), this protein is Aspartate--tRNA(Asp/Asn) ligase.